The sequence spans 501 residues: Raftlin-2 (501 aa).

Disordered stretches follow at residues 1–20 (MGCG…GKIF) and 196–239 (SWNE…RKGE). Residue glycine 2 is the site of N-myristoyl glycine attachment. Residue cysteine 3 is the site of S-palmitoyl cysteine attachment. Positions 220 to 233 (GQYQMEQNGSPTSS) are enriched in polar residues. A Phosphoserine modification is found at serine 405. The disordered stretch occupies residues 407–449 (AQTPDKKASRHIKGEDKNKATSRSIGLDTTSSQPAESRHLPEE). Phosphothreonine is present on threonine 409. The span at 410–425 (PDKKASRHIKGEDKNK) shows a compositional bias: basic and acidic residues. The span at 427–441 (TSRSIGLDTTSSQPA) shows a compositional bias: polar residues. At serine 430 the chain carries Phosphoserine.

It belongs to the raftlin family.

It localises to the cell membrane. Upon bacterial lipopolysaccharide stimulation, mediates clathrin-dependent internalization of TLR4 in dendritic cells, resulting in activation of TICAM1-mediated signaling and subsequent IFNB1 production. May regulate B-cell antigen receptor-mediated signaling. In Homo sapiens (Human), this protein is Raftlin-2 (RFTN2).